Here is a 134-residue protein sequence, read N- to C-terminus: Probable glycine cleavage system H protein (134 aa).

The region spanning 29 to 110 (TVLVGISDYA…PYENWIAKLK (82 aa)) is the Lipoyl-binding domain. K70 is subject to N6-lipoyllysine.

This sequence belongs to the GcvH family. The glycine cleavage system is composed of four proteins: P, T, L and H. (R)-lipoate is required as a cofactor.

Functionally, the glycine cleavage system catalyzes the degradation of glycine. The H protein shuttles the methylamine group of glycine from the P protein to the T protein. This Thermococcus kodakarensis (strain ATCC BAA-918 / JCM 12380 / KOD1) (Pyrococcus kodakaraensis (strain KOD1)) protein is Probable glycine cleavage system H protein.